A 99-amino-acid polypeptide reads, in one-letter code: Aspartyl/glutamyl-tRNA(Asn/Gln) amidotransferase subunit C (99 aa).

The protein belongs to the GatC family. As to quaternary structure, heterotrimer of A, B and C subunits.

It carries out the reaction L-glutamyl-tRNA(Gln) + L-glutamine + ATP + H2O = L-glutaminyl-tRNA(Gln) + L-glutamate + ADP + phosphate + H(+). It catalyses the reaction L-aspartyl-tRNA(Asn) + L-glutamine + ATP + H2O = L-asparaginyl-tRNA(Asn) + L-glutamate + ADP + phosphate + 2 H(+). Allows the formation of correctly charged Asn-tRNA(Asn) or Gln-tRNA(Gln) through the transamidation of misacylated Asp-tRNA(Asn) or Glu-tRNA(Gln) in organisms which lack either or both of asparaginyl-tRNA or glutaminyl-tRNA synthetases. The reaction takes place in the presence of glutamine and ATP through an activated phospho-Asp-tRNA(Asn) or phospho-Glu-tRNA(Gln). The chain is Aspartyl/glutamyl-tRNA(Asn/Gln) amidotransferase subunit C from Ralstonia pickettii (strain 12J).